A 215-amino-acid chain; its full sequence is 3-isopropylmalate dehydratase small subunit (215 aa).

It belongs to the LeuD family. LeuD type 1 subfamily. Heterodimer of LeuC and LeuD.

The enzyme catalyses (2R,3S)-3-isopropylmalate = (2S)-2-isopropylmalate. It functions in the pathway amino-acid biosynthesis; L-leucine biosynthesis; L-leucine from 3-methyl-2-oxobutanoate: step 2/4. In terms of biological role, catalyzes the isomerization between 2-isopropylmalate and 3-isopropylmalate, via the formation of 2-isopropylmaleate. This is 3-isopropylmalate dehydratase small subunit from Stutzerimonas stutzeri (strain A1501) (Pseudomonas stutzeri).